A 371-amino-acid chain; its full sequence is MSNQHTLLISNLLPVGSNISTWWNFGSMLLTCLILQITTGFFLAIHYTANINLAFSSVTHIMRDVPYGWIMQNLHAIGASMFFICIYIHIARGLYYGLYMNKNVWLSGTTLLITLMATAFFGYVLPWGQMSFWAATVITNLLTAIPYLGTTITTWLWGGFSINDPTLTRFFALHFILPFAIISLSSIHIILLHNKGSNNPLGTNSDIDKIPFHPYHSYKDTLMTISLFILMFTILSFSPDLFNDPENFSKANPLVTPQHIKPEWYFLFAYGILRSIPNKLGGTLALLMSVTILMTAPFTHTSHMRPMTFRPLAQMAFWTLIATFITITWTASKPVEPPFIIISQMTSILYFLFFIMNPLLGWTENKIMMNN.

4 helical membrane-spanning segments follow: residues 25-45, 69-90, 105-125, and 170-190; these read FGSM…FLAI, WIMQ…YIHI, WLSG…GYVL, and FFAL…IHII. 2 residues coordinate heme b: His75 and His89. The heme b site is built by His174 and His188. An a ubiquinone-binding site is contributed by His193. A run of 4 helical transmembrane segments spans residues 218–238, 280–300, 312–332, and 339–358; these read YKDT…LSFS, LGGT…PFTH, LAQM…WTAS, and FIII…IMNP.

It belongs to the cytochrome b family. As to quaternary structure, the cytochrome bc1 complex contains 3 respiratory subunits (MT-CYB, CYC1 and UQCRFS1), 2 core proteins (UQCRC1 and UQCRC2) and probably 6 low-molecular weight proteins. Heme b is required as a cofactor.

Its subcellular location is the mitochondrion inner membrane. Functionally, component of the ubiquinol-cytochrome c reductase complex (complex III or cytochrome b-c1 complex) that is part of the mitochondrial respiratory chain. The b-c1 complex mediates electron transfer from ubiquinol to cytochrome c. Contributes to the generation of a proton gradient across the mitochondrial membrane that is then used for ATP synthesis. In Sinomicrurus kelloggi (Kellogg's coral snake), this protein is Cytochrome b (MT-CYB).